The following is a 508-amino-acid chain: Mitochondrial distribution and morphology protein 10 (508 aa).

Residues 160-195 (PAHPTSTRPTPPQTPPSHTRQPSEPSTPAPSPTPGN) form a disordered region.

The protein belongs to the MDM10 family. Component of the ER-mitochondria encounter structure (ERMES) or MDM complex, composed of MMM1, MDM10, MDM12 and MDM34. Associates with the mitochondrial outer membrane sorting assembly machinery SAM(core) complex.

The protein localises to the mitochondrion outer membrane. Component of the ERMES/MDM complex, which serves as a molecular tether to connect the endoplasmic reticulum and mitochondria. Components of this complex are involved in the control of mitochondrial shape and protein biogenesis and may function in phospholipid exchange. MDM10 is involved in the late assembly steps of the general translocase of the mitochondrial outer membrane (TOM complex). Functions in the TOM40-specific route of the assembly of outer membrane beta-barrel proteins, including the association of TOM40 with the receptor TOM22 and small TOM proteins. Can associate with the SAM(core) complex as well as the MDM12-MMM1 complex, both involved in late steps of the major beta-barrel assembly pathway, that is responsible for biogenesis of all outer membrane beta-barrel proteins. May act as a switch that shuttles between both complexes and channels precursor proteins into the TOM40-specific pathway. Plays a role in mitochondrial morphology and in the inheritance of mitochondria. The chain is Mitochondrial distribution and morphology protein 10 from Cryptococcus neoformans var. neoformans serotype D (strain B-3501A) (Filobasidiella neoformans).